Consider the following 221-residue polypeptide: Deoxyribose-phosphate aldolase (221 aa).

Aspartate 91 (proton donor/acceptor) is an active-site residue. Catalysis depends on lysine 153, which acts as the Schiff-base intermediate with acetaldehyde. Catalysis depends on lysine 182, which acts as the Proton donor/acceptor.

The protein belongs to the DeoC/FbaB aldolase family. DeoC type 1 subfamily.

It localises to the cytoplasm. The enzyme catalyses 2-deoxy-D-ribose 5-phosphate = D-glyceraldehyde 3-phosphate + acetaldehyde. The protein operates within carbohydrate degradation; 2-deoxy-D-ribose 1-phosphate degradation; D-glyceraldehyde 3-phosphate and acetaldehyde from 2-deoxy-alpha-D-ribose 1-phosphate: step 2/2. Its function is as follows. Catalyzes a reversible aldol reaction between acetaldehyde and D-glyceraldehyde 3-phosphate to generate 2-deoxy-D-ribose 5-phosphate. This is Deoxyribose-phosphate aldolase from Clostridium botulinum (strain Eklund 17B / Type B).